A 260-amino-acid polypeptide reads, in one-letter code: Phosphate import ATP-binding protein PstB (260 aa).

Residues I14–I255 enclose the ABC transporter domain. ATP is bound at residue G46–S53.

It belongs to the ABC transporter superfamily. Phosphate importer (TC 3.A.1.7) family. The complex is composed of two ATP-binding proteins (PstB), two transmembrane proteins (PstC and PstA) and a solute-binding protein (PstS).

It is found in the cell inner membrane. It catalyses the reaction phosphate(out) + ATP + H2O = ADP + 2 phosphate(in) + H(+). In terms of biological role, part of the ABC transporter complex PstSACB involved in phosphate import. Responsible for energy coupling to the transport system. The chain is Phosphate import ATP-binding protein PstB from Borrelia garinii subsp. bavariensis (strain ATCC BAA-2496 / DSM 23469 / PBi) (Borreliella bavariensis).